A 740-amino-acid polypeptide reads, in one-letter code: Phosphoribosylformylglycinamidine synthase subunit PurL (740 aa).

His-50 is a catalytic residue. The ATP site is built by Tyr-53 and Lys-92. Residue Glu-94 participates in Mg(2+) binding. Residues 95 to 98 (SHNH) and Arg-117 each bind substrate. The active-site Proton acceptor is the His-96. Asp-118 provides a ligand contact to Mg(2+). Residue Gln-241 participates in substrate binding. Position 269 (Asp-269) interacts with Mg(2+). Residue 313–315 (ESQ) coordinates substrate. Residues Asp-495 and Gly-532 each contribute to the ATP site. Asn-533 provides a ligand contact to Mg(2+). Ser-535 is a substrate binding site.

Belongs to the FGAMS family. As to quaternary structure, monomer. Part of the FGAM synthase complex composed of 1 PurL, 1 PurQ and 2 PurS subunits.

It localises to the cytoplasm. The enzyme catalyses N(2)-formyl-N(1)-(5-phospho-beta-D-ribosyl)glycinamide + L-glutamine + ATP + H2O = 2-formamido-N(1)-(5-O-phospho-beta-D-ribosyl)acetamidine + L-glutamate + ADP + phosphate + H(+). The protein operates within purine metabolism; IMP biosynthesis via de novo pathway; 5-amino-1-(5-phospho-D-ribosyl)imidazole from N(2)-formyl-N(1)-(5-phospho-D-ribosyl)glycinamide: step 1/2. Its function is as follows. Part of the phosphoribosylformylglycinamidine synthase complex involved in the purines biosynthetic pathway. Catalyzes the ATP-dependent conversion of formylglycinamide ribonucleotide (FGAR) and glutamine to yield formylglycinamidine ribonucleotide (FGAM) and glutamate. The FGAM synthase complex is composed of three subunits. PurQ produces an ammonia molecule by converting glutamine to glutamate. PurL transfers the ammonia molecule to FGAR to form FGAM in an ATP-dependent manner. PurS interacts with PurQ and PurL and is thought to assist in the transfer of the ammonia molecule from PurQ to PurL. The chain is Phosphoribosylformylglycinamidine synthase subunit PurL from Brucella abortus (strain S19).